The primary structure comprises 642 residues: Chaperone protein DnaK (642 aa).

Position 200 is a phosphothreonine; by autocatalysis (Thr-200). Over residues 600–616 (EAAQQSAGAAGPMPGAP) the composition is skewed to low complexity. A disordered region spans residues 600-642 (EAAQQSAGAAGPMPGAPAEEEPSDGPRKAKGRVVDAEIVDDDK). The segment covering 623–634 (DGPRKAKGRVVD) has biased composition (basic and acidic residues).

Belongs to the heat shock protein 70 family.

In terms of biological role, acts as a chaperone. This is Chaperone protein DnaK from Akkermansia muciniphila (strain ATCC BAA-835 / DSM 22959 / JCM 33894 / BCRC 81048 / CCUG 64013 / CIP 107961 / Muc).